Consider the following 358-residue polypeptide: Src kinase-associated phosphoprotein 2 (358 aa).

2 positions are modified to phosphoserine: Ser-5 and Ser-6. The interval 62–88 (ESQDKGDAEDGEEYDDPFAGPPDTISL) is disordered. A Phosphotyrosine modification is found at Tyr-75. Ser-87 and Ser-90 each carry phosphoserine. The PH domain occupies 116-219 (FVLKAGYLEK…WVQQLNFVLQ (104 aa)). Phosphotyrosine is present on residues Tyr-151 and Tyr-197. Phosphoserine is present on Ser-223. The tract at residues 232-254 (ERGELYDDVDHPLPSSSPTRSLP) is disordered. Positions 243–253 (PLPSSSPTRSL) are enriched in low complexity. Tyr-260 carries the phosphotyrosine modification. Residues Ser-282 and Ser-285 each carry the phosphoserine modification. Residues 296-357 (NYANFYQGLW…PKAYVMEMYD (62 aa)) form the SH3 domain.

Belongs to the SKAP family. As to quaternary structure, interacts with FYB1, which is required for SKAP2 protein stability. Interacts with PTPNS1. Part of a complex consisting of SKAP2, FYB1 and PTPNS1. Part of a complex consisting of SKAP2, FYB1 and LILRB3. Interacts with LAT, GRB2, PTK2B and PRAM1. May interact with actin. May interact with FYN, HCK and LYN. Interacts with FASLG.

It is found in the cytoplasm. In terms of biological role, may be involved in B-cell and macrophage adhesion processes. In B-cells, may act by coupling the B-cell receptor (BCR) to integrin activation. May play a role in src signaling pathway. This chain is Src kinase-associated phosphoprotein 2 (SKAP2), found in Bos taurus (Bovine).